The sequence spans 843 residues: Complement component C7 (843 aa).

Positions 1-22 are cleaved as a signal peptide; the sequence is MKVISLFILVGFIGEFQSFSSA. Residues 27 to 80 form the TSP type-1 1 domain; it reads NCQWDFYAPWSECNGCTKTQTRRRSVAVYGQYGGQPCVGNAFETQSCEPTRGCP. 7 disulfides stabilise this stretch: cysteine 28–cysteine 63, cysteine 39–cysteine 73, cysteine 42–cysteine 79, cysteine 85–cysteine 96, cysteine 91–cysteine 109, cysteine 103–cysteine 119, and cysteine 128–cysteine 165. Tryptophan 36 carries C-linked (Man) tryptophan glycosylation. In terms of domain architecture, LDL-receptor class A spans 83–121; it reads EGCGERFRCFSGQCISKSLVCNGDSDCDEDSADEDRCED. Over residues 108 to 120 the composition is skewed to acidic residues; that stretch reads DCDEDSADEDRCE. The segment at 108–143 is disordered; it reads DCDEDSADEDRCEDSERRPSCDIDKPPPNIELTGNG. Residues 121–132 are compositionally biased toward basic and acidic residues; the sequence is DSERRPSCDIDK. The 333-residue stretch at 124–456 folds into the MACPF domain; it reads RRPSCDIDKP…EYLDEFDPCH (333 aa). Residue asparagine 202 is glycosylated (N-linked (GlcNAc...) asparagine). Residues 219–240 form a disordered region; the sequence is SRKRSFFRSSSSSSRSYTSHTN. Positions 225–234 are enriched in low complexity; that stretch reads FRSSSSSSRS. Disulfide bonds link cysteine 337–cysteine 353, cysteine 433–cysteine 560, cysteine 455–cysteine 505, cysteine 457–cysteine 473, cysteine 460–cysteine 475, cysteine 477–cysteine 486, cysteine 512–cysteine 545, cysteine 523–cysteine 535, cysteine 571–cysteine 613, cysteine 599–cysteine 626, cysteine 631–cysteine 673, and cysteine 659–cysteine 688. The region spanning 457 to 487 is the EGF-like domain; that stretch reads CRPCQNGGLATVEGTHCLCHCKPYTFGAACE. In terms of domain architecture, TSP type-1 2 spans 500 to 549; sequence DGGWSCWSSWSPCVQGKKTRSRECNNPPPSGGGRSCVGETTESTQCEDEE. Tryptophan 503, tryptophan 506, and tryptophan 509 each carry a C-linked (Man) tryptophan; partial glycan. Positions 516–538 are disordered; sequence KKTRSRECNNPPPSGGGRSCVGE. 2 CCP regions span residues 545–615 and 616–693; these read CEDE…RCGE and DLRW…QKEN. 2 Sushi domains span residues 569–628 and 629–690; these read EFCP…HCQK and IACV…RCVQ. Factor I module (FIM) regions lie at residues 695-770 and 771-843; these read LTQA…ASAE and KACG…AETQ. Threonine 696 carries O-linked (GalNAc...) threonine glycosylation. Intrachain disulfides connect cysteine 702/cysteine 713, cysteine 715/cysteine 750, cysteine 721/cysteine 743, cysteine 728/cysteine 763, cysteine 773/cysteine 782, cysteine 776/cysteine 789, cysteine 791/cysteine 825, cysteine 797/cysteine 818, and cysteine 805/cysteine 838. N-linked (GlcNAc...) (complex) asparagine glycosylation is present at asparagine 754.

Belongs to the complement C6/C7/C8/C9 family. In terms of assembly, monomer or dimer; as a C5b-7 complex it can also form multimeric rosettes. Component of the membrane attack complex (MAC), composed of complement C5b, C6, C7, C8A, C8B, C8G and multiple copies of the pore-forming subunit C9. In terms of processing, C-, N- and O-glycosylated. O-glycosylated with core 1 or possibly core 8 glycans.

The protein resides in the secreted. The protein localises to the target cell membrane. Membrane attack complex (MAC) assembly is inhibited by CD59, thereby protecting self-cells from damage during complement activation. MAC assembly is also inhibited by clusterin (CLU) chaperones that inhibit polymerization of C9. Component of the membrane attack complex (MAC), a multiprotein complex activated by the complement cascade, which inserts into a target cell membrane and forms a pore, leading to target cell membrane rupture and cell lysis. The MAC is initiated by proteolytic cleavage of C5 into complement C5b in response to the classical, alternative, lectin and GZMK complement pathways. The complement pathways consist in a cascade of proteins that leads to phagocytosis and breakdown of pathogens and signaling that strengthens the adaptive immune system. C7 serves as a membrane anchor. During MAC assembly, associates with C5b and C6 to form the C5b-7 complex, a key lipophilic precursor of the MAC complex, which associates with the outer leaflet and reduces the energy for membrane bending. The chain is Complement component C7 from Homo sapiens (Human).